The following is a 479-amino-acid chain: MDETSPLVSPERAQPPDYTFPSGSGAHFPQVPGGAVRVAAAAGSGPSPPGSPGHDRERQPLLDRARGAAAQGQTQTVAAQAQALAAQAAAAAHAAQAHRERNEFPEDPEFEAVVRQAELAIERCIFPERIYQGSSGSYFVKDPQGRIIAVFKPKNEEPYGHLNPKWTKWLQKLCCPCCFGRDCLVLNQGYLSEAGASLVDQKLELNIVPRTKVVYLASETFNYSAIDRVKSRGKRLALEKVPKVGQRFNRIGLPPKVGSFQLFVEGYKDADYWLRRFEAEPLPENTNRQLLLQFERLVVLDYIIRNTDRGNDNWLIKYDCPMDSSSSRDTDWVVVKEPVIKVAAIDNGLAFPLKHPDSWRAYPFYWAWLPQAKVPFSQEIKDLILPKISDPNFVKDLEEDLYELFKKDPGFDRGQFHKQIAVMRGQILNLTQALKDNKSPLHLVQMPPVIVETARSHQRSSSESYTQSFQSRKPFFSWW.

M1 is modified (N-acetylmethionine). Positions 1 to 74 (MDETSPLVSP…ARGAAAQGQT (74 aa)) are disordered. A phosphoserine mark is found at S5, S9, S44, S47, and S51. Residues 31–45 (VPGGAVRVAAAAGSG) are compositionally biased toward low complexity. Over residues 53–66 (GHDRERQPLLDRAR) the composition is skewed to basic and acidic residues. Positions 124-453 (CIFPERIYQG…VQMPPVIVET (330 aa)) constitute a PI3K/PI4K catalytic domain. The G-loop stretch occupies residues 130 to 136 (IYQGSSG). Residues 131–137 (YQGSSGS) and K152 contribute to the ATP site. Positions 157–159 (EPY) are important for substrate binding. The tract at residues 165-178 (KWTKWLQKLCCPCC) is important for interaction with membranes. Residues C174, C175, C177, and C178 are each lipidated (S-palmitoyl cysteine). Position 261–264 (261–264 (QLFV)) interacts with ATP. The interval 268 to 276 (KDADYWLRR) is important for interaction with membranes. The interval 305–313 (RNTDRGNDN) is catalytic loop. The tract at residues 344–364 (AIDNGLAFPLKHPDSWRAYPF) is activation loop. Residue D346 coordinates ATP. Residues 359-368 (WRAYPFYWAW) are important for interaction with membranes. S462 carries the phosphoserine modification.

This sequence belongs to the PI3/PI4-kinase family. Type II PI4K subfamily. As to quaternary structure, associates with the BLOC-1 and the AP-3 complexes; the BLOC-1 complex is required for optimal binding of PI4K2A to the AP-3 complex. Interacts with BLOC1S5 and DTNBP1. Interacts with FOS; this interaction may enhance phosphatidylinositol phosphorylation activity. Interacts with ITCH. Interacts with ATG9A. Post-translationally, palmitoylated by ZDHHC3 and ZDHHC7 in the CCPCC motif. Palmitoylation is cholesterol-dependent, and required for TGN localization. Ubiquitinated by ITCH; this does not lead to proteasomal degradation. Widely expressed. Highest expression is observed in kidney, brain, heart, skeletal muscle, and placenta and lowest expression is observed in colon, thymus, and small intestine.

Its subcellular location is the golgi apparatus. The protein resides in the trans-Golgi network membrane. It is found in the membrane raft. It localises to the cell projection. The protein localises to the dendrite. Its subcellular location is the presynaptic cell membrane. The protein resides in the synapse. It is found in the synaptosome. It localises to the mitochondrion. The protein localises to the endosome. Its subcellular location is the endosome membrane. The protein resides in the cytoplasmic vesicle. It is found in the membrane. It localises to the cell membrane. The protein localises to the perikaryon. Its subcellular location is the neuron projection. The enzyme catalyses a 1,2-diacyl-sn-glycero-3-phospho-(1D-myo-inositol) + ATP = a 1,2-diacyl-sn-glycero-3-phospho-(1D-myo-inositol 4-phosphate) + ADP + H(+). Functionally, membrane-bound phosphatidylinositol-4 kinase (PI4-kinase) that catalyzes the phosphorylation of phosphatidylinositol (PI) to phosphatidylinositol 4-phosphate (PI4P), a lipid that plays important roles in endocytosis, Golgi function, protein sorting and membrane trafficking and is required for prolonged survival of neurons. Besides, phosphorylation of phosphatidylinositol (PI) to phosphatidylinositol 4-phosphate (PI4P) is the first committed step in the generation of phosphatidylinositol 4,5-bisphosphate (PIP2), a precursor of the second messenger inositol 1,4,5-trisphosphate (InsP3). The chain is Phosphatidylinositol 4-kinase type 2-alpha (PI4K2A) from Homo sapiens (Human).